The sequence spans 263 residues: Type-2Ba cytolytic delta-endotoxin (263 aa).

This sequence belongs to the cyt1/cyt2 endotoxin family. In terms of processing, active after proteolytic processing.

Its function is as follows. Kills the larvae of dipteran insects by making pores in the epithelial cell membrane of the insect midgut. The protein is Type-2Ba cytolytic delta-endotoxin (cyt2Ba1) of Bacillus thuringiensis subsp. israelensis.